The following is a 474-amino-acid chain: Tumor necrosis factor receptor superfamily member 1B (474 aa).

The first 22 residues, 1–22, serve as a signal peptide directing secretion; sequence MAPAALWVALVFELQLWATGHT. Residues 23–258 are Extracellular-facing; that stretch reads VPAQVVLTPY…PIIEQSTKGG (236 aa). O-linked (GalNAc...) threonine glycosylation occurs at threonine 30. TNFR-Cys repeat units lie at residues 39-77, 78-119, 120-164, and 165-203; these read ECQI…TVCA, DCEA…NRVC, ACEA…VLCK, and ACAP…AVCA. 10 disulfides stabilise this stretch: cysteine 40/cysteine 54, cysteine 55/cysteine 68, cysteine 58/cysteine 76, cysteine 79/cysteine 94, cysteine 97/cysteine 111, cysteine 101/cysteine 119, cysteine 121/cysteine 127, cysteine 136/cysteine 145, cysteine 139/cysteine 163, and cysteine 166/cysteine 181. The N-linked (GlcNAc...) asparagine glycan is linked to asparagine 69. N-linked (GlcNAc...) asparagine glycosylation is present at asparagine 195. O-linked (GalNAc...) threonine glycosylation is found at threonine 208 and threonine 224. The tract at residues 220–243 is disordered; it reads QPEPTRSQPLDQEPGPSQTPSILT. A helical membrane pass occupies residues 259–288; the sequence is ISLPIGLIVGVTSLGLLMLGLVNCIILVQR. Residues 289–474 are Cytoplasmic-facing; the sequence is KKKPSCLQRD…WFDQIAVKVA (186 aa). 3 disordered regions span residues 295 to 314, 321 to 378, and 397 to 463; these read LQRD…DAVG, LTTA…GSHG, and SQCS…PSQA. Residues 297 to 310 show a composition bias toward basic and acidic residues; it reads RDAKVPHVPDEKSQ. 2 stretches are compositionally biased toward low complexity: residues 324–338 and 363–378; these read APSS…SASA and ARAS…GSHG. At serine 331 the chain carries Phosphoserine. Positions 429 to 442 are enriched in polar residues; it reads ECPSQSPCETTETL.

Binds to TRAF2. Interacts with BMX. Interacts (activated form) with XPNPEP3.

It is found in the membrane. In terms of biological role, receptor with high affinity for TNFSF2/TNF-alpha and approximately 5-fold lower affinity for homotrimeric TNFSF1/lymphotoxin-alpha. The TRAF1/TRAF2 complex recruits the apoptotic suppressors BIRC2 and BIRC3 to TNFRSF1B/TNFR2. The polypeptide is Tumor necrosis factor receptor superfamily member 1B (Tnfrsf1b) (Mus musculus (Mouse)).